A 427-amino-acid chain; its full sequence is Trigger factor (427 aa).

The PPIase FKBP-type domain occupies 163–248 (GDTVVIDFVG…IHEVKTKEVP (86 aa)).

This sequence belongs to the FKBP-type PPIase family. Tig subfamily.

It is found in the cytoplasm. It carries out the reaction [protein]-peptidylproline (omega=180) = [protein]-peptidylproline (omega=0). In terms of biological role, involved in protein export. Acts as a chaperone by maintaining the newly synthesized protein in an open conformation. Functions as a peptidyl-prolyl cis-trans isomerase. The protein is Trigger factor of Streptococcus agalactiae serotype III (strain NEM316).